A 474-amino-acid chain; its full sequence is Probable CAAX prenyl protease 1 (474 aa).

Helical transmembrane passes span 103–123, 196–216, and 230–250; these read SWFS…IIKY, IFVI…SVVV, and FIMY…TIAP. Histidine 332 contacts Zn(2+). The active site involves glutamate 333. Histidine 336 contacts Zn(2+). Helical transmembrane passes span 344–364 and 381–401; these read INTI…AAFI and VIVG…ILTF. Glutamate 411 contacts Zn(2+). Aspartate 415 acts as the Proton donor in catalysis.

Belongs to the peptidase M48A family. The cofactor is Zn(2+).

Its subcellular location is the endoplasmic reticulum membrane. The catalysed reaction is Hydrolyzes the peptide bond -P2-(S-farnesyl or geranylgeranyl)C-P1'-P2'-P3'-COOH where P1' and P2' are amino acids with aliphatic side chains and P3' is any C-terminal residue.. Functionally, proteolytically removes the C-terminal three residues of farnesylated proteins. In Schizosaccharomyces pombe (strain 972 / ATCC 24843) (Fission yeast), this protein is Probable CAAX prenyl protease 1.